The following is a 634-amino-acid chain: Glutamate--tRNA ligase (634 aa).

The short motif at 108-118 (PNPSGPLHIGH) is the 'HIGH' region element.

Belongs to the class-I aminoacyl-tRNA synthetase family. Glutamate--tRNA ligase type 2 subfamily.

The protein localises to the cytoplasm. It carries out the reaction tRNA(Glu) + L-glutamate + ATP = L-glutamyl-tRNA(Glu) + AMP + diphosphate. Its function is as follows. Catalyzes the attachment of glutamate to tRNA(Glu) in a two-step reaction: glutamate is first activated by ATP to form Glu-AMP and then transferred to the acceptor end of tRNA(Glu). The protein is Glutamate--tRNA ligase of Methanoregula boonei (strain DSM 21154 / JCM 14090 / 6A8).